Reading from the N-terminus, the 411-residue chain is LL-diaminopimelate aminotransferase (411 aa).

Residues Y15 and G42 each coordinate substrate. Residues Y72, 108–109 (SK), Y132, N187, Y218, and 246–248 (SFS) contribute to the pyridoxal 5'-phosphate site. Substrate-binding residues include K109, Y132, and N187. K249 is subject to N6-(pyridoxal phosphate)lysine. Residues R257 and N292 each contribute to the pyridoxal 5'-phosphate site. N292 and R388 together coordinate substrate.

Belongs to the class-I pyridoxal-phosphate-dependent aminotransferase family. LL-diaminopimelate aminotransferase subfamily. As to quaternary structure, homodimer. Pyridoxal 5'-phosphate serves as cofactor.

It catalyses the reaction (2S,6S)-2,6-diaminopimelate + 2-oxoglutarate = (S)-2,3,4,5-tetrahydrodipicolinate + L-glutamate + H2O + H(+). It functions in the pathway amino-acid biosynthesis; L-lysine biosynthesis via DAP pathway; LL-2,6-diaminopimelate from (S)-tetrahydrodipicolinate (aminotransferase route): step 1/1. In terms of biological role, involved in the synthesis of meso-diaminopimelate (m-DAP or DL-DAP), required for both lysine and peptidoglycan biosynthesis. Catalyzes the direct conversion of tetrahydrodipicolinate to LL-diaminopimelate. This Nostoc punctiforme (strain ATCC 29133 / PCC 73102) protein is LL-diaminopimelate aminotransferase.